Reading from the N-terminus, the 196-residue chain is ATP-dependent Clp protease proteolytic subunit (196 aa).

The active-site Nucleophile is the Ser101. His126 is a catalytic residue.

Belongs to the peptidase S14 family. Component of the chloroplastic Clp protease core complex.

It is found in the plastid. Its subcellular location is the chloroplast stroma. It carries out the reaction Hydrolysis of proteins to small peptides in the presence of ATP and magnesium. alpha-casein is the usual test substrate. In the absence of ATP, only oligopeptides shorter than five residues are hydrolyzed (such as succinyl-Leu-Tyr-|-NHMec, and Leu-Tyr-Leu-|-Tyr-Trp, in which cleavage of the -Tyr-|-Leu- and -Tyr-|-Trp bonds also occurs).. In terms of biological role, cleaves peptides in various proteins in a process that requires ATP hydrolysis. Has a chymotrypsin-like activity. Plays a major role in the degradation of misfolded proteins. The polypeptide is ATP-dependent Clp protease proteolytic subunit (Nasturtium officinale (Watercress)).